A 221-amino-acid polypeptide reads, in one-letter code: Serine protease inhibitor 7 (221 aa).

The first 22 residues, 1–22, serve as a signal peptide directing secretion; the sequence is MKCLFLLCLCLVPIVVFSSTFT. A propeptide spanning residues 23-28 is cleaved from the precursor; it reads SKNPIN. A Vacuolar targeting signal motif is present at residues 25 to 30; the sequence is NPINLP. Intrachain disulfides connect Cys-76–Cys-125 and Cys-174–Cys-191.

It belongs to the protease inhibitor I3 (leguminous Kunitz-type inhibitor) family. As to expression, tubers. Not detected in root, stem, leaves or flower bud.

It localises to the vacuole. In terms of biological role, inhibitor of trypsin (serine protease). May protect the plant by inhibiting proteases of invading organisms. This is Serine protease inhibitor 7 from Solanum tuberosum (Potato).